A 967-amino-acid chain; its full sequence is Cytosolic carboxypeptidase 2 (967 aa).

The Peptidase M14 domain occupies 330-601 (YPYTYSDLQR…HFCDTLLDYC (272 aa)). 3 residues coordinate Zn(2+): His396, Glu399, and His492. The active-site Proton donor/acceptor is the Glu565. 2 disordered regions span residues 679–706 (KRRL…LHEA) and 944–967 (PGIS…NTMK). A compositionally biased stretch (polar residues) spans 946-967 (ISSSEPHFPNSSEDITVRNTMK).

It belongs to the peptidase M14 family. Zn(2+) serves as cofactor.

Its subcellular location is the cytoplasm. It localises to the cytosol. The protein localises to the cytoskeleton. The protein resides in the microtubule organizing center. It is found in the centrosome. Its subcellular location is the centriole. It localises to the cilium basal body. It carries out the reaction (L-glutamyl)(n+1)-gamma-L-glutamyl-L-glutamyl-[protein] + H2O = (L-glutamyl)(n)-gamma-L-glutamyl-L-glutamyl-[protein] + L-glutamate. Metallocarboxypeptidase that mediates deglutamylation of target proteins. Catalyzes the deglutamylation of polyglutamate side chains generated by post-translational polyglutamylation in proteins such as tubulins. Also removes gene-encoded polyglutamates from the carboxy-terminus of target proteins such as MYLK. Does not show detyrosinase or deglycylase activities from the carboxy-terminus of tubulin. Functionally, metallocarboxypeptidase that mediates deglutamylation of tubulin and non-tubulin target proteins. Catalyzes the removal of polyglutamate side chains present on the gamma-carboxyl group of glutamate residues within the C-terminal tail of tubulin protein. Specifically cleaves tubulin long-side-chains, while it is not able to remove the branching point glutamate. Also catalyzes the removal of polyglutamate residues from the carboxy-terminus of non-tubulin proteins. This chain is Cytosolic carboxypeptidase 2 (agbl2), found in Xenopus tropicalis (Western clawed frog).